The following is a 454-amino-acid chain: Asparagine--tRNA ligase (454 aa).

It belongs to the class-II aminoacyl-tRNA synthetase family. Homodimer.

It is found in the cytoplasm. It carries out the reaction tRNA(Asn) + L-asparagine + ATP = L-asparaginyl-tRNA(Asn) + AMP + diphosphate + H(+). The sequence is that of Asparagine--tRNA ligase from Mesoplasma florum (strain ATCC 33453 / NBRC 100688 / NCTC 11704 / L1) (Acholeplasma florum).